The sequence spans 287 residues: Efem/EfeO family lipoprotein (287 aa).

An N-terminal signal peptide occupies residues 1–17 (MKKLPTILLASSLLLAA). A lipid anchor (N-palmitoyl cysteine) is attached at Cys-18. Cys-18 is lipidated: S-diacylglycerol cysteine. The segment at 20–50 (NNSHSDDNSNKDKQSQSSKGENKASLQKATK) is disordered. Residues 23–33 (HSDDNSNKDKQ) show a composition bias toward basic and acidic residues.

Belongs to the EfeM/EfeO family.

The protein resides in the cell membrane. This Staphylococcus haemolyticus (strain JCSC1435) protein is Efem/EfeO family lipoprotein.